Here is a 958-residue protein sequence, read N- to C-terminus: Translation initiation factor IF-2 (958 aa).

Disordered regions lie at residues 67–95 (APAA…APAP) and 111–355 (PAPA…VPRG). The segment covering 75-95 (APAPGPAAPKAPAPAPAAPAP) has biased composition (pro residues). Residues 140-161 (PAPARQGGQAPRPGGPRPGNNP) are compositionally biased toward low complexity. A compositionally biased stretch (basic and acidic residues) spans 195-206 (RGERRNDGERPG). Residues 209 to 221 (RPAAGAGGPRPAA) are compositionally biased toward low complexity. Residues 228–241 (PGAPRPGAPRPGAP) show a composition bias toward pro residues. A compositionally biased stretch (gly residues) spans 268–325 (GGAGRPGGAGRPGGGPGRPGGAPGAGTGGGAPAGGGFGKGGRGRGGTQGAFGKGGAGR). Residues 326–335 (GKQRKSKRAK) are compositionally biased toward basic residues. The 172-residue stretch at 450 to 621 (ARAPVVTVMG…AVLLTADAAL (172 aa)) folds into the tr-type G domain. Residues 459 to 466 (GHVDHGKT) are G1. 459-466 (GHVDHGKT) serves as a coordination point for GTP. The segment at 484-488 (GITQH) is G2. The interval 509–512 (DTPG) is G3. Residues 509–513 (DTPGH) and 563–566 (NKID) contribute to the GTP site. A G4 region spans residues 563 to 566 (NKID). The segment at 599 to 601 (SAR) is G5.

It belongs to the TRAFAC class translation factor GTPase superfamily. Classic translation factor GTPase family. IF-2 subfamily.

It localises to the cytoplasm. One of the essential components for the initiation of protein synthesis. Protects formylmethionyl-tRNA from spontaneous hydrolysis and promotes its binding to the 30S ribosomal subunits. Also involved in the hydrolysis of GTP during the formation of the 70S ribosomal complex. This is Translation initiation factor IF-2 from Paenarthrobacter aurescens (strain TC1).